Reading from the N-terminus, the 327-residue chain is D-threonate 4-phosphate dehydrogenase (327 aa).

Substrate-binding residues include histidine 139 and threonine 140. Residues histidine 169, histidine 213, and histidine 268 each coordinate a divalent metal cation. Residues lysine 276, asparagine 285, and arginine 294 each coordinate substrate.

The protein belongs to the PdxA family. PdxA2 subfamily. As to quaternary structure, homodimer. The cofactor is a divalent metal cation.

The enzyme catalyses 4-O-phospho-D-threonate + NAD(+) = dihydroxyacetone phosphate + CO2 + NADH. Functionally, catalyzes the NAD-dependent oxidation and subsequent decarboxylation of D-threonate 4-phosphate to produce dihydroxyacetone phosphate (DHAP). Can also use 4-hydroxy-L-threonine 4-phosphate as substrate. In Salmonella typhimurium (strain LT2 / SGSC1412 / ATCC 700720), this protein is D-threonate 4-phosphate dehydrogenase.